A 562-amino-acid polypeptide reads, in one-letter code: Formate--tetrahydrofolate ligase (562 aa).

An ATP-binding site is contributed by threonine 71–serine 78.

The protein belongs to the formate--tetrahydrofolate ligase family.

The enzyme catalyses (6S)-5,6,7,8-tetrahydrofolate + formate + ATP = (6R)-10-formyltetrahydrofolate + ADP + phosphate. It functions in the pathway one-carbon metabolism; tetrahydrofolate interconversion. In Bacillus cereus (strain ATCC 14579 / DSM 31 / CCUG 7414 / JCM 2152 / NBRC 15305 / NCIMB 9373 / NCTC 2599 / NRRL B-3711), this protein is Formate--tetrahydrofolate ligase.